We begin with the raw amino-acid sequence, 137 residues long: ATP synthase epsilon chain, sodium ion specific (137 aa).

This sequence belongs to the ATPase epsilon chain family. F-type ATPases have 2 components, CF(1) - the catalytic core - and CF(0) - the membrane proton channel. CF(1) has five subunits: alpha(3), beta(3), gamma(1), delta(1), epsilon(1). CF(0) has three main subunits: a, b and c.

The protein resides in the cell inner membrane. Functionally, produces ATP from ADP in the presence of a sodium gradient across the membrane. The sequence is that of ATP synthase epsilon chain, sodium ion specific (atpC) from Propionigenium modestum.